The following is a 344-amino-acid chain: Thiamine thiazole synthase (344 aa).

Substrate contacts are provided by residues C90, 111–112, G119, and V184; that span reads EA. C232 carries the post-translational modification 2,3-didehydroalanine (Cys). Substrate is bound by residues D234, H249, M301, and 311-313; that span reads RMG.

This sequence belongs to the THI4 family. In terms of assembly, homooctamer. Interacts with cyp-41. Fe cation serves as cofactor. During the catalytic reaction, a sulfide is transferred from Cys-232 to a reaction intermediate, generating a dehydroalanine residue.

The protein localises to the cytoplasm. It is found in the nucleus. The enzyme catalyses [ADP-thiazole synthase]-L-cysteine + glycine + NAD(+) = [ADP-thiazole synthase]-dehydroalanine + ADP-5-ethyl-4-methylthiazole-2-carboxylate + nicotinamide + 3 H2O + 2 H(+). Involved in biosynthesis of the thiamine precursor thiazole. Catalyzes the conversion of NAD and glycine to adenosine diphosphate 5-(2-hydroxyethyl)-4-methylthiazole-2-carboxylic acid (ADT), an adenylated thiazole intermediate. The reaction includes an iron-dependent sulfide transfer from a conserved cysteine residue of the protein to a thiazole intermediate. The enzyme can only undergo a single turnover, which suggests it is a suicide enzyme. May have additional roles in adaptation to various stress conditions and in DNA damage tolerance. This Neurospora crassa (strain ATCC 24698 / 74-OR23-1A / CBS 708.71 / DSM 1257 / FGSC 987) protein is Thiamine thiazole synthase.